The sequence spans 245 residues: Phosducin (245 aa).

Residues 1–14 (MEEAKSQSLEEDFE) are compositionally biased toward acidic residues. Positions 1 to 68 (MEEAKSQSLE…RDNKDSKERF (68 aa)) are disordered. One can recognise a Phosducin domain in the interval 1 to 241 (MEEAKSQSLE…THALDQTNME (241 aa)). Basic and acidic residues predominate over residues 59-68 (RDNKDSKERF). A Phosphoserine; by PKA modification is found at Ser73. Residues 111–245 (YGFVYELETG…DQTNMEEDIE (135 aa)) are thioredoxin fold.

It belongs to the phosducin family. As to quaternary structure, interacts with CRX. Forms a complex with the beta and gamma subunits of the GTP-binding protein, transducin. In terms of processing, light-induced changes in cyclic nucleotide levels modulate the phosphorylation of this protein by cAMP kinase.

It is found in the cytoplasm. Its subcellular location is the cytosol. The protein localises to the nucleus. It localises to the cell projection. The protein resides in the cilium. It is found in the photoreceptor outer segment. Its subcellular location is the photoreceptor inner segment. Its function is as follows. Inhibits the transcriptional activation activity of the cone-rod homeobox CRX. May participate in the regulation of visual phototransduction or in the integration of photoreceptor metabolism. This is Phosducin (PDC) from Felis catus (Cat).